A 129-amino-acid polypeptide reads, in one-letter code: Ribosome-binding factor A (129 aa).

Belongs to the RbfA family. Monomer. Binds 30S ribosomal subunits, but not 50S ribosomal subunits or 70S ribosomes.

It localises to the cytoplasm. Functionally, one of several proteins that assist in the late maturation steps of the functional core of the 30S ribosomal subunit. Associates with free 30S ribosomal subunits (but not with 30S subunits that are part of 70S ribosomes or polysomes). Required for efficient processing of 16S rRNA. May interact with the 5'-terminal helix region of 16S rRNA. The protein is Ribosome-binding factor A of Thioalkalivibrio sulfidiphilus (strain HL-EbGR7).